The sequence spans 364 residues: 1-aminocyclopropane-1-carboxylate oxidase homolog 11 (364 aa).

The region spanning 213-312 (KSLLMICHYY…RISVASFFSS (100 aa)) is the Fe2OG dioxygenase domain. Fe cation-binding residues include H237, D239, and H293. R303 lines the 2-oxoglutarate pocket.

It belongs to the iron/ascorbate-dependent oxidoreductase family. It depends on Fe(2+) as a cofactor.

This chain is 1-aminocyclopropane-1-carboxylate oxidase homolog 11, found in Arabidopsis thaliana (Mouse-ear cress).